Consider the following 567-residue polypeptide: Urease subunit alpha (567 aa).

Residues 130-567 form the Urease domain; it reads GGIDTHIHFI…LPLAQRYFLF (438 aa). 3 residues coordinate Ni(2+): H135, H137, and K218. K218 carries the N6-carboxylysine modification. H220 lines the substrate pocket. H247 and H273 together coordinate Ni(2+). H321 serves as the catalytic Proton donor. D361 is a binding site for Ni(2+).

The protein belongs to the metallo-dependent hydrolases superfamily. Urease alpha subunit family. As to quaternary structure, heterotrimer of UreA (gamma), UreB (beta) and UreC (alpha) subunits. Three heterotrimers associate to form the active enzyme. The cofactor is Ni cation. In terms of processing, carboxylation allows a single lysine to coordinate two nickel ions.

It localises to the cytoplasm. The catalysed reaction is urea + 2 H2O + H(+) = hydrogencarbonate + 2 NH4(+). It participates in nitrogen metabolism; urea degradation; CO(2) and NH(3) from urea (urease route): step 1/1. In Methylobacillus flagellatus (strain ATCC 51484 / DSM 6875 / VKM B-1610 / KT), this protein is Urease subunit alpha.